A 188-amino-acid polypeptide reads, in one-letter code: Elongation factor P (188 aa).

The protein belongs to the elongation factor P family.

The protein resides in the cytoplasm. Its pathway is protein biosynthesis; polypeptide chain elongation. In terms of biological role, involved in peptide bond synthesis. Stimulates efficient translation and peptide-bond synthesis on native or reconstituted 70S ribosomes in vitro. Probably functions indirectly by altering the affinity of the ribosome for aminoacyl-tRNA, thus increasing their reactivity as acceptors for peptidyl transferase. The protein is Elongation factor P of Azotobacter vinelandii (strain DJ / ATCC BAA-1303).